The chain runs to 221 residues: Ras-related protein Rab-27A (221 aa).

N-acetylserine is present on Ser2. Ser2 carries the phosphoserine modification. 16–24 (GDSGVGKTS) lines the GTP pocket. Residues 38–46 (FITTVGIDF) carry the Effector region motif. Residues 74–78 (DTAGQ), 133–136 (NKSD), and 163–165 (SAA) each bind GTP. Cysteines 123 and 188 form a disulfide. 2 S-geranylgeranyl cysteine lipidation sites follow: Cys219 and Cys221. A Cysteine methyl ester modification is found at Cys221.

The protein belongs to the small GTPase superfamily. Rab family. Binds SYTL1, SLAC2B, MYRIP, SYTL3, SYTL4 and SYTL5. Interacts with RPH3A and RPH3A. Binds MLPH and SYTL2. Interacts with UNC13D. Does not interact with the BLOC-3 complex (heterodimer of HPS1 and HPS4). Interacts (GDP-bound form preferentially) with DENND10. As to expression, high levels in eye, intestine, lung, pancreas and spleen, and low or absent in brain, liver, heart, kidney, and skeletal muscle.

Its subcellular location is the membrane. It is found in the melanosome. The protein localises to the late endosome. The protein resides in the lysosome. It carries out the reaction GTP + H2O = GDP + phosphate + H(+). With respect to regulation, regulated by guanine nucleotide exchange factors (GEFs) which promote the exchange of bound GDP for free GTP, GTPase activating proteins (GAPs) which increase the GTP hydrolysis activity, and GDP dissociation inhibitors which inhibit the dissociation of the nucleotide from the GTPase. Activated by GEFs such as DENND10. Functionally, small GTPase which cycles between active GTP-bound and inactive GDP-bound states. In its active state, binds to a variety of effector proteins to regulate homeostasis of late endocytic pathway, including endosomal positioning, maturation and secretion. Plays a role in cytotoxic granule exocytosis in lymphocytes. Required for both granule maturation and granule docking and priming at the immunologic synapse. The protein is Ras-related protein Rab-27A (Rab27a) of Rattus norvegicus (Rat).